The following is a 99-amino-acid chain: Large ribosomal subunit protein P1 (99 aa).

Part of the 50S ribosomal subunit. Homodimer, it forms part of the ribosomal stalk which helps the ribosome interact with GTP-bound translation factors. Forms both a pentameric uL10/P0(P1)2(P1)2 and heptameric uL10/P0(P1)2(P1)2(P1)2 complex, where uL10/P0 forms an elongated spine to which the P1 dimers bind in a sequential fashion. The proportion of heptameric complexes increases during cell growth.

Functionally, forms part of the ribosomal stalk, playing a central role in the interaction of the ribosome with GTP-bound translation factors. This chain is Large ribosomal subunit protein P1, found in Methanococcus vannielii.